Consider the following 34-residue polypeptide: Beta/mu-theraphotoxin-Pe1a (34 aa).

3 disulfide bridges follow: cysteine 2-cysteine 16, cysteine 9-cysteine 21, and cysteine 15-cysteine 28.

This sequence belongs to the neurotoxin 10 (Hwtx-1) family. 54 (ProTx-1) subfamily. As to expression, expressed by the venom gland.

The protein localises to the secreted. Ion channel impairing toxin that inhibits voltage-gated sodium channels. The recombinantly expressed toxin shows a weak activity against Nav1.7/SCN9A (25% inhibition at 10 uM), and shifts the voltage dependence of channel activation to more depolarized potentials. The polypeptide is Beta/mu-theraphotoxin-Pe1a (Phormingochilus everetti (Malaysian purple earth tiger tarantula)).